Consider the following 380-residue polypeptide: Queuine tRNA-ribosyltransferase (380 aa).

The active-site Proton acceptor is the D95. Substrate is bound by residues 95–99, D149, Q192, and G219; that span reads DSGGF. The interval 250–256 is RNA binding; sequence GVGSPDS. Residue D269 is the Nucleophile of the active site. Residues 274 to 278 are RNA binding; important for wobble base 34 recognition; it reads TRIGR. Positions 307, 309, 312, and 338 each coordinate Zn(2+).

The protein belongs to the queuine tRNA-ribosyltransferase family. In terms of assembly, homodimer. Within each dimer, one monomer is responsible for RNA recognition and catalysis, while the other monomer binds to the replacement base PreQ1. It depends on Zn(2+) as a cofactor.

It catalyses the reaction 7-aminomethyl-7-carbaguanine + guanosine(34) in tRNA = 7-aminomethyl-7-carbaguanosine(34) in tRNA + guanine. The protein operates within tRNA modification; tRNA-queuosine biosynthesis. Catalyzes the base-exchange of a guanine (G) residue with the queuine precursor 7-aminomethyl-7-deazaguanine (PreQ1) at position 34 (anticodon wobble position) in tRNAs with GU(N) anticodons (tRNA-Asp, -Asn, -His and -Tyr). Catalysis occurs through a double-displacement mechanism. The nucleophile active site attacks the C1' of nucleotide 34 to detach the guanine base from the RNA, forming a covalent enzyme-RNA intermediate. The proton acceptor active site deprotonates the incoming PreQ1, allowing a nucleophilic attack on the C1' of the ribose to form the product. After dissociation, two additional enzymatic reactions on the tRNA convert PreQ1 to queuine (Q), resulting in the hypermodified nucleoside queuosine (7-(((4,5-cis-dihydroxy-2-cyclopenten-1-yl)amino)methyl)-7-deazaguanosine). This Geobacillus kaustophilus (strain HTA426) protein is Queuine tRNA-ribosyltransferase.